We begin with the raw amino-acid sequence, 130 residues long: MAQAQYAGTGRRKNAVARVRLVPGTGKITVNKKDLEEYIPHADLRLVINQPFAVTSTEGSYDVHVNVVGGGYAGQSGAIRHGIARALLQVDPDFRDSLKRAGLLTRDARMVERKKPGLKKARKASQFSKR.

The protein belongs to the universal ribosomal protein uS9 family.

This Streptococcus thermophilus (strain CNRZ 1066) protein is Small ribosomal subunit protein uS9.